Consider the following 316-residue polypeptide: D-alanine--D-alanine ligase (316 aa).

In terms of domain architecture, ATP-grasp spans 109 to 304 (KRLWRGMDLP…FDEMVLQILA (196 aa)). Residue 135-190 (AADLGLPLIVKPAREGSSLGMMKVESIEALQSAYREAVIFDTAVFAERWLPGAEYT) participates in ATP binding. Mg(2+) contacts are provided by aspartate 258, glutamate 271, and asparagine 273.

It belongs to the D-alanine--D-alanine ligase family. Requires Mg(2+) as cofactor. It depends on Mn(2+) as a cofactor.

Its subcellular location is the cytoplasm. The enzyme catalyses 2 D-alanine + ATP = D-alanyl-D-alanine + ADP + phosphate + H(+). It functions in the pathway cell wall biogenesis; peptidoglycan biosynthesis. In terms of biological role, cell wall formation. The protein is D-alanine--D-alanine ligase of Nitrosococcus oceani (strain ATCC 19707 / BCRC 17464 / JCM 30415 / NCIMB 11848 / C-107).